The sequence spans 136 residues: Aspartate 1-decarboxylase (136 aa).

Catalysis depends on Ser25, which acts as the Schiff-base intermediate with substrate; via pyruvic acid. Position 25 is a pyruvic acid (Ser) (Ser25). Thr57 serves as a coordination point for substrate. The active-site Proton donor is the Tyr58. Gly73–Ala75 is a substrate binding site.

This sequence belongs to the PanD family. In terms of assembly, heterooctamer of four alpha and four beta subunits. Requires pyruvate as cofactor. Is synthesized initially as an inactive proenzyme, which is activated by self-cleavage at a specific serine bond to produce a beta-subunit with a hydroxyl group at its C-terminus and an alpha-subunit with a pyruvoyl group at its N-terminus.

The protein resides in the cytoplasm. It carries out the reaction L-aspartate + H(+) = beta-alanine + CO2. The protein operates within cofactor biosynthesis; (R)-pantothenate biosynthesis; beta-alanine from L-aspartate: step 1/1. Catalyzes the pyruvoyl-dependent decarboxylation of aspartate to produce beta-alanine. The sequence is that of Aspartate 1-decarboxylase from Corynebacterium glutamicum (strain R).